Here is a 349-residue protein sequence, read N- to C-terminus: Isopentenyl-diphosphate delta-isomerase (349 aa).

9 to 10 contributes to the substrate binding site; the sequence is RK. FMN-binding positions include 65–67, Ser95, and Asn124; that span reads AMT. 95-97 contributes to the substrate binding site; it reads STH. Gln154 is a substrate binding site. Glu155 is a binding site for Mg(2+). FMN is bound by residues Lys186, Ser211, Thr216, 262–264, and 283–284; these read GLR and SR.

This sequence belongs to the IPP isomerase type 2 family. As to quaternary structure, homooctamer. Dimer of tetramers. It depends on FMN as a cofactor. NADPH serves as cofactor. Mg(2+) is required as a cofactor.

It localises to the cytoplasm. It carries out the reaction isopentenyl diphosphate = dimethylallyl diphosphate. Involved in the biosynthesis of isoprenoids. Catalyzes the 1,3-allylic rearrangement of the homoallylic substrate isopentenyl (IPP) to its allylic isomer, dimethylallyl diphosphate (DMAPP). The sequence is that of Isopentenyl-diphosphate delta-isomerase from Staphylococcus epidermidis (strain ATCC 35984 / DSM 28319 / BCRC 17069 / CCUG 31568 / BM 3577 / RP62A).